We begin with the raw amino-acid sequence, 212 residues long: Tetraspanin-31-A (212 aa).

Residues 1–12 (MVCGGFTCSKNA) are Cytoplasmic-facing. Residues 13 to 33 (LCALNVVYMLVGLLLIGVAAW) traverse the membrane as a helical segment. At 34 to 44 (GKGFGIVSSIH) the chain is on the extracellular side. Residues 45 to 65 (IIGGVIAIGVFLLLIAIIGLI) form a helical membrane-spanning segment. Over 66–72 (GAVSHHQ) the chain is Cytoplasmic. A helical membrane pass occupies residues 73 to 93 (VMLFIYMVVLILVFIFQFIVS). Residues 94-175 (CSCLAMNRSQ…MLNHADEALK (82 aa)) lie on the Extracellular side of the membrane. N-linked (GlcNAc...) asparagine glycosylation is found at asparagine 100, asparagine 109, asparagine 117, and asparagine 134. A helical membrane pass occupies residues 176–196 (ILGGVGLFFSFTEILGVWLAF). At 197 to 212 (RFRNQKDPRANPSAFL) the chain is on the cytoplasmic side.

It belongs to the tetraspanin (TM4SF) family.

It localises to the membrane. The polypeptide is Tetraspanin-31-A (tspan31-a) (Xenopus laevis (African clawed frog)).